Reading from the N-terminus, the 430-residue chain is Asparagine--tRNA ligase (430 aa).

The protein belongs to the class-II aminoacyl-tRNA synthetase family. Homodimer.

The protein resides in the cytoplasm. The catalysed reaction is tRNA(Asn) + L-asparagine + ATP = L-asparaginyl-tRNA(Asn) + AMP + diphosphate + H(+). This chain is Asparagine--tRNA ligase, found in Staphylococcus haemolyticus (strain JCSC1435).